Here is a 424-residue protein sequence, read N- to C-terminus: Serine hydroxymethyltransferase (424 aa).

Residues Leu118 and 122–124 (GHL) each bind (6S)-5,6,7,8-tetrahydrofolate. Position 227 is an N6-(pyridoxal phosphate)lysine (Lys227). (6S)-5,6,7,8-tetrahydrofolate contacts are provided by residues Glu243 and 351–353 (SPF).

The protein belongs to the SHMT family. Homodimer. Requires pyridoxal 5'-phosphate as cofactor.

The protein resides in the cytoplasm. It catalyses the reaction (6R)-5,10-methylene-5,6,7,8-tetrahydrofolate + glycine + H2O = (6S)-5,6,7,8-tetrahydrofolate + L-serine. It participates in one-carbon metabolism; tetrahydrofolate interconversion. Its pathway is amino-acid biosynthesis; glycine biosynthesis; glycine from L-serine: step 1/1. Functionally, catalyzes the reversible interconversion of serine and glycine with tetrahydrofolate (THF) serving as the one-carbon carrier. This reaction serves as the major source of one-carbon groups required for the biosynthesis of purines, thymidylate, methionine, and other important biomolecules. Also exhibits THF-independent aldolase activity toward beta-hydroxyamino acids, producing glycine and aldehydes, via a retro-aldol mechanism. This is Serine hydroxymethyltransferase from Thermosipho africanus (strain TCF52B).